A 440-amino-acid chain; its full sequence is Ribosomal protein uS12 methylthiotransferase RimO (440 aa).

Residues 6 to 116 (PKVGFVSLGC…VVSAVHEVVP (111 aa)) form the MTTase N-terminal domain. The [4Fe-4S] cluster site is built by Cys-15, Cys-51, Cys-80, Cys-149, Cys-153, and Cys-156. Residues 135 to 374 (LTPRHYAYLK…AHQQAISSAR (240 aa)) form the Radical SAM core domain. The 65-residue stretch at 376-440 (QAKIGLEMDV…DEYDMWGELV (65 aa)) folds into the TRAM domain.

It belongs to the methylthiotransferase family. RimO subfamily. The cofactor is [4Fe-4S] cluster.

The protein localises to the cytoplasm. It carries out the reaction L-aspartate(89)-[ribosomal protein uS12]-hydrogen + (sulfur carrier)-SH + AH2 + 2 S-adenosyl-L-methionine = 3-methylsulfanyl-L-aspartate(89)-[ribosomal protein uS12]-hydrogen + (sulfur carrier)-H + 5'-deoxyadenosine + L-methionine + A + S-adenosyl-L-homocysteine + 2 H(+). Its function is as follows. Catalyzes the methylthiolation of an aspartic acid residue of ribosomal protein uS12. This is Ribosomal protein uS12 methylthiotransferase RimO from Ectopseudomonas mendocina (strain ymp) (Pseudomonas mendocina).